The chain runs to 430 residues: Adenylosuccinate synthetase (430 aa).

Residues glycine 13–lysine 19 and glycine 41–threonine 43 each bind GTP. The active-site Proton acceptor is the aspartate 14. Residues aspartate 14 and glycine 41 each contribute to the Mg(2+) site. IMP is bound by residues aspartate 14–lysine 17, asparagine 39–histidine 42, threonine 130, arginine 144, glutamine 225, threonine 240, and arginine 304. The active-site Proton donor is histidine 42. Substrate is bound at residue serine 300–arginine 306. GTP contacts are provided by residues arginine 306, lysine 332–aspartate 334, and serine 414–glycine 416.

This sequence belongs to the adenylosuccinate synthetase family. In terms of assembly, homodimer. Mg(2+) is required as a cofactor.

It is found in the cytoplasm. The enzyme catalyses IMP + L-aspartate + GTP = N(6)-(1,2-dicarboxyethyl)-AMP + GDP + phosphate + 2 H(+). The protein operates within purine metabolism; AMP biosynthesis via de novo pathway; AMP from IMP: step 1/2. Its function is as follows. Plays an important role in the de novo pathway of purine nucleotide biosynthesis. Catalyzes the first committed step in the biosynthesis of AMP from IMP. This Buchnera aphidicola subsp. Schizaphis graminum (strain Sg) protein is Adenylosuccinate synthetase.